The chain runs to 56 residues: Bacteriocin sublancin-168 (56 aa).

The propeptide occupies 1-19 (MEKLFKEVKLEELENQKGS). 2 disulfides stabilise this stretch: C26–C55 and C33–C48. S-linked (Glc) cysteine; by host glycosylation is present at C41.

Monomer. In terms of processing, production of active sublancin-168 requires at least one thiol-disulfide oxidoreductase (BdbB or, in its absence, BdbC). Membrane translocation and cleavage of the precursor are probably performed by SunT.

The protein resides in the secreted. Bacteriocin active against Gram-positive bacteria. Inhibits B.cereus spore outgrowth, after the germination stage, approximately 1000-fold better than it inhibits exponential growth of the same cells. Inhibits B.subtilis strain ATCC 6633. This is Bacteriocin sublancin-168 (sunA) from Bacillus pumilus (Bacillus mesentericus).